We begin with the raw amino-acid sequence, 1036 residues long: DNA-directed RNA polymerase subunit beta (1036 aa).

Belongs to the RNA polymerase beta chain family. In terms of assembly, in plastids the minimal PEP RNA polymerase catalytic core is composed of four subunits: alpha, beta, beta', and beta''. When a (nuclear-encoded) sigma factor is associated with the core the holoenzyme is formed, which can initiate transcription.

It localises to the plastid. The protein localises to the chloroplast. It carries out the reaction RNA(n) + a ribonucleoside 5'-triphosphate = RNA(n+1) + diphosphate. Functionally, DNA-dependent RNA polymerase catalyzes the transcription of DNA into RNA using the four ribonucleoside triphosphates as substrates. This is DNA-directed RNA polymerase subunit beta from Cyanidioschyzon merolae (strain NIES-3377 / 10D) (Unicellular red alga).